The chain runs to 804 residues: Leucine--tRNA ligase (804 aa).

A 'HIGH' region motif is present at residues proline 40–histidine 51. The 'KMSKS' region signature appears at lysine 576–serine 580. Lysine 579 serves as a coordination point for ATP.

It belongs to the class-I aminoacyl-tRNA synthetase family.

The protein localises to the cytoplasm. The catalysed reaction is tRNA(Leu) + L-leucine + ATP = L-leucyl-tRNA(Leu) + AMP + diphosphate. The chain is Leucine--tRNA ligase from Staphylococcus aureus (strain bovine RF122 / ET3-1).